The chain runs to 216 residues: Uracil phosphoribosyltransferase (216 aa).

5-phospho-alpha-D-ribose 1-diphosphate contacts are provided by residues arginine 84, arginine 109, and 137-145 (DPMLATGGS). Uracil contacts are provided by residues isoleucine 202 and 207–209 (GDA). Aspartate 208 is a binding site for 5-phospho-alpha-D-ribose 1-diphosphate.

It belongs to the UPRTase family. Requires Mg(2+) as cofactor.

It catalyses the reaction UMP + diphosphate = 5-phospho-alpha-D-ribose 1-diphosphate + uracil. Its pathway is pyrimidine metabolism; UMP biosynthesis via salvage pathway; UMP from uracil: step 1/1. With respect to regulation, allosterically activated by GTP. Catalyzes the conversion of uracil and 5-phospho-alpha-D-ribose 1-diphosphate (PRPP) to UMP and diphosphate. This is Uracil phosphoribosyltransferase from Nostoc sp. (strain PCC 7120 / SAG 25.82 / UTEX 2576).